The following is a 532-amino-acid chain: E3 ubiquitin-protein ligase ICP0 (532 aa).

Residues Cys8, Cys11, Cys24, His26, Cys29, Cys32, Cys43, and Cys46 each coordinate Zn(2+). The segment at 8-47 (CPICLEDPSNYSMALPCLHAFCYVCITRWIRQNPTCPLCK) adopts an RING-type zinc-finger fold. Disordered regions lie at residues 206–391 (EYID…PMRP), 406–426 (APRDSSTSEAAGPSRLGAGPR), 461–498 (EDESARRRGNVLLRPRRQSVPPVPYPDIASTSPLIRQG), and 510–532 (QTQPAEPEEMRCPHNCQRYRRNQ). Composition is skewed to acidic residues over residues 217-227 (SEEETDSDIEV) and 234-243 (DPEDTSDETS). Residues 286–295 (RSARLRRRQP) are compositionally biased toward basic residues.

Auto-ubiquitinated.

It carries out the reaction S-ubiquitinyl-[E2 ubiquitin-conjugating enzyme]-L-cysteine + [acceptor protein]-L-lysine = [E2 ubiquitin-conjugating enzyme]-L-cysteine + N(6)-ubiquitinyl-[acceptor protein]-L-lysine.. Functionally, evades nuclear antiviral defenses triggered by dsDNA viruses. Acts during the initial stages of lytic infection and the reactivation of latent viral genome. Prevents the antiviral effect of nuclear bodies by degrading host PML and SP100. The polypeptide is E3 ubiquitin-protein ligase ICP0 (63) (Equus caballus (Horse)).